The following is a 2067-amino-acid chain: Nuclear receptor coactivator 6 (2067 aa).

Residues 1–932 (MVLDDLPNFE…PPRKKKNCHQ (932 aa)) form a TBP/GTF2A-binding region region. The segment at 1–1060 (MVLDDLPNFE…LPVSQNVHPP (1060 aa)) is CREBBP-binding region. The tract at residues 1–1314 (MVLDDLPNFE…QAHKLDSVVV (1314 aa)) is NCOA1-binding region. Arginine 95 carries the asymmetric dimethylarginine modification. 2 disordered regions span residues 181 to 253 (AVMT…RQMN) and 293 to 548 (TRPL…PGNS). The span at 293–304 (TRPLQQHQQQPQ) shows a compositional bias: low complexity. Polar residues-rich tracts occupy residues 338 to 347 (SLGTMTTNQG), 357 to 372 (MQAQ…TVQT), 383 to 405 (GSQQ…QFTA), 421 to 457 (PLQQ…QQQM), 465 to 506 (NPLS…QGPQ), and 526 to 548 (GQAN…PGNS). Residues 777-931 (VNNSPSQVMG…KPPRKKKNCH (155 aa)) are NCOA6IP-binding region. Serine 888 is modified (phosphoserine). An LXXLL motif 1 motif is present at residues 891–895 (LVNLL). Disordered stretches follow at residues 903–1279 (HFGV…QGLN), 1313–1358 (VVNS…APKL), 1424–1481 (NIPQ…EENK), 1497–1581 (QLLD…IPPV), and 1769–1822 (LNPD…GKGK). Low complexity predominate over residues 907 to 916 (NNKQNNTNAN). Residues 917–929 (KPKKKKPPRKKKN) are compositionally biased toward basic residues. Residues 984–996 (QRPLPQMPPQLMQ) are compositionally biased toward low complexity. Over residues 999–1024 (APPPQPPQQQPQPQLPQQQQPPPPSQ) the composition is skewed to pro residues. Low complexity predominate over residues 1025–1044 (PQSQQQQQQQQMMMMLMMQQ). An asymmetric dimethylarginine mark is found at arginine 1050 and arginine 1061. Over residues 1066-1078 (PDSQRMPVQQSGN) the composition is skewed to polar residues. Arginine 1099 carries the asymmetric dimethylarginine modification. Residues 1103-1123 (SVNTPMGSNSRKMVYQENPQN) are compositionally biased toward polar residues. Residues 1124–1137 (SSSSPLGEMSSLPE) are compositionally biased toward low complexity. 3 stretches are compositionally biased toward polar residues: residues 1152-1165 (NMPS…NQLM), 1176-1194 (LSAT…SLPS), and 1205-1217 (APTQ…TPNR). Residues 1222 to 1235 (PYYPQTPNNRPPST) show a composition bias toward pro residues. Residues 1313–1324 (VVNSGKQSNPGT) show a composition bias toward polar residues. Residues 1326-1349 (KRASPSNSRRSSPGSSRKTTPSPG) show a composition bias toward low complexity. The segment covering 1424–1435 (NIPQDSDCQNAQ) has biased composition (polar residues). Positions 1495–1499 (LSQLL) match the LXXLL motif 2 motif. Positions 1545–1562 (EPSTSLSSPHSSEPCSTL) are enriched in low complexity. The EP300/CRSP3-binding region stretch occupies residues 1644–2067 (SEGQSAAQSN…AVQSKRRKSK (424 aa)). The span at 1775–1805 (SPQTNTSADQSTLPPSQPTTVVSSLLTNSPG) shows a compositional bias: polar residues. Residues 1806 to 1818 (SSANRRSPVSSSK) are compositionally biased toward low complexity. N6-acetyllysine is present on residues lysine 1822 and lysine 1825. Disordered regions lie at residues 1840–1911 (GSLE…LPGG) and 1957–2067 (VGSH…RKSK). Polar residues predominate over residues 1871 to 1883 (EQCSTELDSKTPT). A compositionally biased stretch (low complexity) spans 1892 to 1904 (MTSSPMAPSSTST). Positions 2005–2014 (EPKEIVEKSK) are enriched in basic and acidic residues. Residue serine 2022 is modified to Phosphoserine.

As to quaternary structure, monomer and homodimer. Interacts in vitro with the basal transcription factors GTF2A and TBP, suggesting an autonomous transactivation function. Interacts with NCOA1, CRSP3, RBM14, the histone acetyltransferase proteins EP300 and CREBBP, and with methyltransferase proteins NCOA6IP and PRMT2. Interacts with RBM39. Component of the MLL2/3 complex (also named ASCOM complex), at least composed of KMT2D/MLL2 or KMT2C/MLL3, ASH2L, RBBP5, WDR5, NCOA6, DPY30, KDM6A, PAXIP1/PTIP, PAGR1 and alpha- and beta-tubulin. Interacts with ZNF335; may enhance ligand-dependent transcriptional activation by nuclear hormone receptors. Phosphorylated. Widely expressed. High expression in testis and weak expression in small intestine.

The protein resides in the nucleus. Nuclear receptor coactivator that directly binds nuclear receptors and stimulates the transcriptional activities in a hormone-dependent fashion. Coactivates expression in an agonist- and AF2-dependent manner. Involved in the coactivation of different nuclear receptors, such as for steroids (GR and ERs), retinoids (RARs and RXRs), thyroid hormone (TRs), vitamin D3 (VDR) and prostanoids (PPARs). Probably functions as a general coactivator, rather than just a nuclear receptor coactivator. May also be involved in the coactivation of the NF-kappa-B pathway. May coactivate expression via a remodeling of chromatin and its interaction with histone acetyltransferase proteins. Involved in placental, cardiac, hepatic and embryonic development. In Mus musculus (Mouse), this protein is Nuclear receptor coactivator 6 (Ncoa6).